We begin with the raw amino-acid sequence, 57 residues long: Stress response protein (57 aa).

The Nuclear localization signal signature appears at 6 to 10 (RKERR).

Mesophyll protoplasts.

It is found in the nucleus. Its function is as follows. Stress response. May play a role in the reentering of protoplasts into the cell cycle. The protein is Stress response protein of Nicotiana sylvestris (Wood tobacco).